The primary structure comprises 249 residues: AA9 family lytic polysaccharide monooxygenase cel61B (249 aa).

A signal peptide spans 1–19 (MKSCAILAALGCLAGSVLG). His20 contacts Cu(2+). Asn25 is a glycosylation site (N-linked (GlcNAc...) asparagine). 2 cysteine pairs are disulfide-bonded: Cys78-Cys198 and Cys120-Cys124. Position 108 (His108) interacts with Cu(2+). O2 is bound by residues His184 and Gln193. Residue Tyr195 participates in Cu(2+) binding.

It belongs to the polysaccharide monooxygenase AA9 family. In terms of assembly, monomer. Cu(2+) is required as a cofactor.

It is found in the secreted. It catalyses the reaction [(1-&gt;4)-beta-D-glucosyl]n+m + reduced acceptor + O2 = 4-dehydro-beta-D-glucosyl-[(1-&gt;4)-beta-D-glucosyl]n-1 + [(1-&gt;4)-beta-D-glucosyl]m + acceptor + H2O.. Its function is as follows. Lytic polysaccharide monooxygenase (LPMO) that depolymerizes crystalline and amorphous polysaccharides via the oxidation of scissile alpha- or beta-(1-4)-glycosidic bonds, yielding C1 or C4 oxidation products. Catalysis by LPMOs requires the reduction of the active-site copper from Cu(II) to Cu(I) by a reducing agent and H(2)O(2) or O(2) as a cosubstrate. The protein is AA9 family lytic polysaccharide monooxygenase cel61B of Hypocrea jecorina (strain QM6a) (Trichoderma reesei).